Here is a 319-residue protein sequence, read N- to C-terminus: Methionyl-tRNA formyltransferase (319 aa).

S112–P115 is a binding site for (6S)-5,6,7,8-tetrahydrofolate.

It belongs to the Fmt family.

The catalysed reaction is L-methionyl-tRNA(fMet) + (6R)-10-formyltetrahydrofolate = N-formyl-L-methionyl-tRNA(fMet) + (6S)-5,6,7,8-tetrahydrofolate + H(+). In terms of biological role, attaches a formyl group to the free amino group of methionyl-tRNA(fMet). The formyl group appears to play a dual role in the initiator identity of N-formylmethionyl-tRNA by promoting its recognition by IF2 and preventing the misappropriation of this tRNA by the elongation apparatus. The chain is Methionyl-tRNA formyltransferase from Shewanella denitrificans (strain OS217 / ATCC BAA-1090 / DSM 15013).